A 324-amino-acid chain; its full sequence is Fe-S cluster assembly protein dre2 (324 aa).

The tract at residues 28–158 is N-terminal SAM-like domain; the sequence is GSPSKRTLLL…KMDQPKSFAI (131 aa). The linker stretch occupies residues 159-217; that stretch reads PLRRNGKKKDAAKTETFAPAPAPAPPVQPVTVGMINNDDDYENDDDLIDEDTLLSDEDL. Residues Cys-226, Cys-237, Cys-240, and Cys-242 each coordinate [2Fe-2S] cluster. Positions 226–242 are fe-S binding site A; it reads CQPKPGRRRRACKDCTC. [4Fe-4S] cluster contacts are provided by Cys-287, Cys-290, Cys-298, and Cys-301. 2 consecutive short sequence motifs (cx2C motif) follow at residues 287-290 and 298-301; these read CGNC and CAGC. Positions 287 to 301 are fe-S binding site B; sequence CGNCALGDAFRCAGC.

Belongs to the anamorsin family. Monomer. Interacts with tah18. Interacts with mia40. [2Fe-2S] cluster is required as a cofactor. [4Fe-4S] cluster serves as cofactor.

It is found in the cytoplasm. The protein localises to the mitochondrion intermembrane space. Functionally, component of the cytosolic iron-sulfur (Fe-S) protein assembly (CIA) machinery required for the maturation of extramitochondrial Fe-S proteins. Part of an electron transfer chain functioning in an early step of cytosolic Fe-S biogenesis, facilitating the de novo assembly of a [4Fe-4S] cluster on the scaffold complex cfd1-nbp35. Electrons are transferred to dre2 from NADPH via the FAD- and FMN-containing protein tah18. Tah18-dre2 are also required for the assembly of the diferric tyrosyl radical cofactor of ribonucleotide reductase (RNR), probably by providing electrons for reduction during radical cofactor maturation in the catalytic small subunit rnr2. This chain is Fe-S cluster assembly protein dre2, found in Aspergillus niger (strain ATCC MYA-4892 / CBS 513.88 / FGSC A1513).